We begin with the raw amino-acid sequence, 268 residues long: Eukaryotic translation initiation factor 3 subunit G-2 (268 aa).

The 79-residue stretch at 187–265 folds into the RRM domain; it reads SAVRISNLSE…LILCVEWSKP (79 aa).

The protein belongs to the eIF-3 subunit G family. As to quaternary structure, component of the eukaryotic translation initiation factor 3 (eIF-3) complex. The eIF-3 complex interacts with pix.

The protein resides in the cytoplasm. In terms of biological role, RNA-binding component of the eukaryotic translation initiation factor 3 (eIF-3) complex, which is involved in protein synthesis of a specialized repertoire of mRNAs and, together with other initiation factors, stimulates binding of mRNA and methionyl-tRNAi to the 40S ribosome. The eIF-3 complex specifically targets and initiates translation of a subset of mRNAs involved in cell proliferation. This subunit can bind 18S rRNA. The polypeptide is Eukaryotic translation initiation factor 3 subunit G-2 (Drosophila willistoni (Fruit fly)).